The chain runs to 154 residues: Myoglobin (154 aa).

The Globin domain maps to 2 to 148; it reads GLSDGEWQLV…FRKDMASNYK (147 aa). Serine 4 carries the post-translational modification Phosphoserine. Residue histidine 65 coordinates nitrite. Residue histidine 65 coordinates O2. Threonine 68 carries the phosphothreonine modification. Histidine 94 contacts heme b.

The protein belongs to the globin family. Monomeric.

The protein resides in the cytoplasm. It localises to the sarcoplasm. The enzyme catalyses Fe(III)-heme b-[protein] + nitric oxide + H2O = Fe(II)-heme b-[protein] + nitrite + 2 H(+). The catalysed reaction is H2O2 + AH2 = A + 2 H2O. Functionally, monomeric heme protein which primary function is to store oxygen and facilitate its diffusion within muscle tissues. Reversibly binds oxygen through a pentacoordinated heme iron and enables its timely and efficient release as needed during periods of heightened demand. Depending on the oxidative conditions of tissues and cells, and in addition to its ability to bind oxygen, it also has a nitrite reductase activity whereby it regulates the production of bioactive nitric oxide. Under stress conditions, like hypoxia and anoxia, it also protects cells against reactive oxygen species thanks to its pseudoperoxidase activity. The chain is Myoglobin from Homo sapiens (Human).